A 195-amino-acid polypeptide reads, in one-letter code: MRVGTWICLPGRPGRCRKQHDLGNCPEVPGIFKTLALSPGAPDMMQQPRVETDTIGAGEGPQQAVPWSAWVTRHGWVRWWVSHMPPSWIQWWSTSNWRQPLQRLLWGLEGILYLLLALMLCHALFTTGSHLLSSLWPVVAAVWRHLLPALLLLVLSALPALLFTASFLLLFSTLLSLVGLLTSMTHPGDTQDLDQ.

2 helical membrane-spanning segments follow: residues 105–125 (LWGLEGILYLLLALMLCHALF) and 145–171 (HLLPALLLLVLSALPALLFTASFLLLF).

The protein resides in the membrane. The polypeptide is Transmembrane protein 239 (TMEM239) (Homo sapiens (Human)).